Reading from the N-terminus, the 178-residue chain is Ribosomal RNA small subunit methyltransferase G (178 aa).

Residues Gly54, Leu59, 105–106 (LE), and Arg120 each bind S-adenosyl-L-methionine.

It belongs to the methyltransferase superfamily. RNA methyltransferase RsmG family.

The protein localises to the cytoplasm. It catalyses the reaction guanosine(527) in 16S rRNA + S-adenosyl-L-methionine = N(7)-methylguanosine(527) in 16S rRNA + S-adenosyl-L-homocysteine. Its function is as follows. Specifically methylates the N7 position of guanine in position 527 of 16S rRNA. The chain is Ribosomal RNA small subunit methyltransferase G from Helicobacter pylori (strain J99 / ATCC 700824) (Campylobacter pylori J99).